The sequence spans 208 residues: Ribonuclease HII (208 aa).

The RNase H type-2 domain maps to 13–202 (DLVAGVDEVG…VRQAYEAREA (190 aa)). Residues D19, E20, and D111 each contribute to the a divalent metal cation site.

It belongs to the RNase HII family. Mn(2+) is required as a cofactor. It depends on Mg(2+) as a cofactor.

It localises to the cytoplasm. The catalysed reaction is Endonucleolytic cleavage to 5'-phosphomonoester.. Functionally, endonuclease that specifically degrades the RNA of RNA-DNA hybrids. This Pseudomonas fluorescens (strain ATCC BAA-477 / NRRL B-23932 / Pf-5) protein is Ribonuclease HII.